We begin with the raw amino-acid sequence, 4834 residues long: E3 ubiquitin-protein ligase HERC2 (4834 aa).

The tract at residues 50 to 88 (TESTQNGELPPRKDDSVEPSGTKKEDLNDKEKKDEEETP) is disordered. Residues 59–84 (PPRKDDSVEPSGTKKEDLNDKEKKDE) are compositionally biased toward basic and acidic residues. Residue threonine 272 is modified to Phosphothreonine. The RCC1 1-1 repeat unit spans residues 415–461 (PTSHKGSLQEVIGWGLIGWKYYANVIGPIQCEGLANLGVTQIACAEK). Residues 462–512 (RFLILSRNGRVYTQAYNSDTLAPQLVQGLASRNIVKIAAHSDGHHYLALAA) form an RCC1 1-2 repeat. One copy of the RCC1 1-3 repeat lies at 513–568 (TGEVYSWGCGDGGRLGHGDTVPLEEPKVISAFSGKQAGKHVVHIACGSTYSAAITA). The RCC1 1-4 repeat unit spans residues 569–620 (EGELYTWGRGNYGRLGHGSSEDEAIPMLVAGLKGLKVIDVACGSGDAQTLAV). One copy of the RCC1 1-5 repeat lies at 623–674 (NGQVWSWGDGDYGKLGRGGSDGCKTPKLIEKLQDLDVVKVRCGSQFSIALTK). Threonine 647 is subject to Phosphothreonine. One copy of the RCC1 1-6 repeat lies at 675–726 (DGQVYSWGKGDNQRLGHGTEEHVRYPKLLEGLQGKKVIDVAAGSTHCLALTE). The stretch at 728–778 (SEVHSWGSNDQCQHFDTLRVTKPEPAALPGLDTKHIVGIACGPAQSFAWSS) is one RCC1 1-7 repeat. The stretch at 948–980 (LHAAITAEIQDIEAKKEAQKEKEIDEQEANAST) forms a coiled coil. The Cytochrome b5 heme-binding domain occupies 1207 to 1283 (VTLIRKADLE…MHAFCVGQYL (77 aa)). The segment at 1555–1575 (RKKRVPKKPESTDDEEKIGNE) is disordered. A compositionally biased stretch (acidic residues) spans 1566-1575 (TDDEEKIGNE). Phosphoserine is present on serine 1577. The 74-residue stretch at 1859-1932 (SGPELAAMMK…KYDLKLAELP (74 aa)) folds into the MIB/HERC2 domain. The disordered stretch occupies residues 1933-1958 (AAAQPSAEDSDTEDDSEAEQTERNIH). The span at 1940-1951 (EDSDTEDDSEAE) shows a compositional bias: acidic residues. Residue serine 1942 is modified to Phosphoserine. The residue at position 1944 (threonine 1944) is a Phosphothreonine. Position 2454 is a phosphoserine (serine 2454). In terms of domain architecture, CPH spans 2554 to 2630 (RADFLSNDDY…RYIHVELIGY (77 aa)). The ZZ-type zinc-finger motif lies at 2703 to 2755 (HPGVTCDGCQMFPINGSRFKCRNCDDFDFCETCFKTKKHNTRHTFGRINEPGQ). Zn(2+) is bound by residues cysteine 2708, cysteine 2711, cysteine 2723, cysteine 2726, cysteine 2732, cysteine 2735, histidine 2741, and histidine 2745. One can recognise a DOC domain in the interval 2759 to 2936 (FCGRSGKQLK…ASDNEEEEDE (178 aa)). Serine 2928 carries the phosphoserine modification. Residues 2958–3009 (RTKVFVWGLNDKDQLGGLKGSKIKVPSFSETLSALNVVQVAGGSKSLFAVTV) form an RCC1 2-1 repeat. The RCC1 2-2 repeat unit spans residues 3010–3064 (EGKVYACGEATNGRLGLGISSGTVPIPRQITALSSYVVKKVAVHSGGRHATALTV). One copy of the RCC1 2-3 repeat lies at 3065–3116 (DGKVFSWGEGDDGKLGHFSRMNCDKPRLIEALKTKRIRDIACGSSHSAALTS). The stretch at 3118 to 3168 (GELYTWGLGEYGRLGHGDNTTQLKPKMVKVLLGHRVIQVACGSRDAQTLAL) is one RCC1 2-4 repeat. Residues 3171 to 3222 (EGLVFSWGDGDFGKLGRGGSEGCNIPQNIERLNGQGVCQIECGAQFSLALTK) form an RCC1 2-5 repeat. One copy of the RCC1 2-6 repeat lies at 3224–3274 (GVVWTWGKGDYFRLGHGSDVHVRKPQVVEGLRGKKIVHVAVGALHCLAVTD). An RCC1 2-7 repeat occupies 3275 to 3326 (SGQVYAWGDNDHGQQGNGTTTVNRKPTLVQGLEGQKITRVACGSSHSVAWTT). Polar residues-rich tracts occupy residues 3602–3611 (SQSGRLSSQP) and 3618–3629 (HPYTDDTSTSGT). The interval 3602–3629 (SQSGRLSSQPVVVESSHPYTDDTSTSGT) is disordered. An RCC1 3-1 repeat occupies 3951-4002 (SGTIYGWGHNHRGQLGGIEGAKVKVPTPCEALATLRPVQLIGGEQTLFAVTA). The stretch at 4004-4056 (GKLYATGYGAGGRLGIGGTESVSTPTLLESIQHVFIKKVAVNSGGKHCLALSS) is one RCC1 3-2 repeat. Residues 4058–4108 (GEVYSWGEAEDGKLGHGNRSPCDRPRVIESLRGIEVVDVAAGGAHSACVTA) form an RCC1 3-3 repeat. The stretch at 4110 to 4162 (GDLYTWGKGRYGRLGHSDSEDQLKPKLVEALQGHRVVDIACGSGDAQTLCLTD) is one RCC1 3-4 repeat. An RCC1 3-5 repeat occupies 4164 to 4214 (DTVWSWGDGDYGKLGRGGSDGCKVPMKIDSLTGLGVVKVECGSQFSVALTK). An RCC1 3-6 repeat occupies 4216–4266 (GAVYTWGKGDYHRLGHGSDDHVRRPRQVQGLQGKKVIAIATGSLHCVCCTE). One copy of the RCC1 3-7 repeat lies at 4268–4318 (GEVYTWGDNDEGQLGDGTTNAIQRPRLVAALQGKKVNRVACGSAHTLAWST). In terms of domain architecture, HECT spans 4457 to 4794 (DSLLLPHRVW…IHFCKSIDTD (338 aa)). Cysteine 4762 functions as the Glycyl thioester intermediate in the catalytic mechanism. The segment at 4804–4834 (EPAADDSSDDSDNEDVDSFASDSTQDYLTGH) is disordered. Residues 4806 to 4820 (AADDSSDDSDNEDVD) show a composition bias toward acidic residues. Phosphoserine occurs at positions 4810, 4811, and 4814. Residues 4823-4834 (ASDSTQDYLTGH) show a composition bias toward polar residues. Threonine 4827 carries the phosphothreonine modification.

As to quaternary structure, interacts (when phosphorylated at Thr-4827 and sumoylated) with RNF8 (via FHA domain); this interaction increases after ionizing radiation (IR) treatment. Interacts with XPA. Interacts with NEURL4. Via its interaction with NEURL4, may indirectly interact with CCP110 and CEP97. Post-translationally, phosphorylation at Thr-4827 is required for interaction with RNF8. In terms of processing, sumoylated with SUMO1 by PIAS4 in response to double-strand breaks (DSBs), promoting the interaction with RNF8.

It localises to the cytoplasm. The protein localises to the cytoskeleton. The protein resides in the microtubule organizing center. Its subcellular location is the centrosome. It is found in the centriole. It localises to the nucleus. The enzyme catalyses S-ubiquitinyl-[E2 ubiquitin-conjugating enzyme]-L-cysteine + [acceptor protein]-L-lysine = [E2 ubiquitin-conjugating enzyme]-L-cysteine + N(6)-ubiquitinyl-[acceptor protein]-L-lysine.. It participates in protein modification; protein ubiquitination. Functionally, E3 ubiquitin-protein ligase that regulates ubiquitin-dependent retention of repair proteins on damaged chromosomes. Recruited to sites of DNA damage in response to ionizing radiation (IR) and facilitates the assembly of UBE2N and RNF8 promoting DNA damage-induced formation of 'Lys-63'-linked ubiquitin chains. Acts as a mediator of binding specificity between UBE2N and RNF8. Involved in the maintenance of RNF168 levels. E3 ubiquitin-protein ligase that promotes the ubiquitination and proteasomal degradation of XPA which influences the circadian oscillation of DNA excision repair activity. By controlling the steady-state expression of the IGF1R receptor, indirectly regulates the insulin-like growth factor receptor signaling pathway. Also modulates iron metabolism by regulating the basal turnover of FBXL5. In Homo sapiens (Human), this protein is E3 ubiquitin-protein ligase HERC2.